The following is a 163-amino-acid chain: Ankyrin repeat domain-containing protein 37 (163 aa).

3 ANK repeats span residues 29-58 (LGQS…DVNQ), 62-91 (FGEA…RIDM), and 95-124 (DGHT…TQDT). A Nuclear localization signal motif is present at residues 129–149 (QSSLHNLKETAAGVKRGQCCQ).

It localises to the nucleus. The protein resides in the cytoplasm. The chain is Ankyrin repeat domain-containing protein 37 (ankrd37) from Xenopus tropicalis (Western clawed frog).